We begin with the raw amino-acid sequence, 270 residues long: Replication protein A 32 kDa subunit (270 aa).

M1 is modified (N-acetylmethionine). S4 and S8 each carry phosphoserine; by PRKDC. Residues 20 to 41 (YTQSPGGFGSPTPSQAEKKSRV) are disordered. Phosphothreonine; by PRKDC is present on T21. The residue at position 23 (S23) is a Phosphoserine; by CDK2. S29 is subject to Phosphoserine; by CDK1. The residue at position 33 (S33) is a Phosphoserine; by PRKDC. Glycyl lysine isopeptide (Lys-Gly) (interchain with G-Cter in ubiquitin) cross-links involve residues K37 and K38. A DNA-binding region (OB) is located at residues 74–148 (VTIVGIIRHA…KSLVAFKIIP (75 aa)). The interval 171 to 192 (KPNSQASAGRPSMSNPGMSEPG) is disordered. The segment at 187 to 270 (GMSEPGNFSG…DDHFKSTDAE (84 aa)) is interaction with RAD52, TIPIN, UNG and XPA.

It belongs to the replication factor A protein 2 family. As to quaternary structure, component of the replication protein A complex (RPA/RP-A), a heterotrimeric complex composed of RPA1, RPA2 and RPA3. Interacts with PRPF19; the PRP19-CDC5L complex is recruited to the sites of DNA repair where it ubiquitinates the replication protein A complex (RPA). Interacts with SERTAD3. Interacts with TIPIN. Interacts with TIMELESS. Interacts with PPP4R2; the interaction is direct, DNA damage-dependent and mediates the recruitment of the PP4 catalytic subunit PPP4C. Interacts (hyperphosphorylated) with RAD51. Interacts with SMARCAL1; the interaction is direct and mediates the recruitment to the RPA complex of SMARCAL1. Interacts with RAD52 and XPA; those interactions are direct and associate RAD52 and XPA to the RPA complex. Interacts with FBH1. Interacts with ETAA1; the interaction is direct and promotes ETAA1 recruitment at stalled replication forks. Interacts with DDI2. Interacts (in unphosphorylated form via N-terminus) with EIF4EBP3; the interaction enhances EIF4EBP3-mediated inhibition of EIF4E-mediated mRNA nuclear export. Interacts with nuclear UNG (isoform 2); this interaction mediates UNG recruitment to RPA-coated single-stranded DNA at stalled replication forks. In terms of processing, differentially phosphorylated throughout the cell cycle, becoming phosphorylated at the G1-S transition and dephosphorylated in late mitosis. Mainly phosphorylated at Ser-23 and Ser-29, by cyclin A-CDK2 and cyclin B-CDK1, respectively during DNA replication and mitosis. Dephosphorylation may require the serine/threonine-protein phosphatase 4. Phosphorylation at Ser-23 and Ser-29 is a prerequisite for further phosphorylation. Becomes hyperphosphorylated on additional residues including Ser-4, Ser-8, Thr-21 and Ser-33 in response to DNA damage. Hyperphosphorylation is mediated by ATM, ATR and PRKDC. Primarily recruited to DNA repair nuclear foci as a hypophosphorylated form it undergoes subsequent hyperphosphorylation, catalyzed by ATR. Hyperphosphorylation is required for RAD51 recruitment to chromatin and efficient DNA repair. Phosphorylation at Thr-21 depends upon RFWD3 presence. Post-translationally, DNA damage-induced 'Lys-63'-linked polyubiquitination by PRPF19 mediates ATRIP recruitment to the RPA complex at sites of DNA damage and activation of ATR. Ubiquitinated by RFWD3 at stalled replication forks in response to DNA damage: ubiquitination by RFWD3 does not lead to degradation by the proteasome and promotes removal of the RPA complex from stalled replication forks, promoting homologous recombination.

It is found in the nucleus. The protein localises to the PML body. As part of the heterotrimeric replication protein A complex (RPA/RP-A), binds and stabilizes single-stranded DNA intermediates, that form during DNA replication or upon DNA stress. It prevents their reannealing and in parallel, recruits and activates different proteins and complexes involved in DNA metabolism. Thereby, it plays an essential role both in DNA replication and the cellular response to DNA damage. In the cellular response to DNA damage, the RPA complex controls DNA repair and DNA damage checkpoint activation. Through recruitment of ATRIP activates the ATR kinase a master regulator of the DNA damage response. It is required for the recruitment of the DNA double-strand break repair factors RAD51 and RAD52 to chromatin in response to DNA damage. Also recruits to sites of DNA damage proteins like XPA and XPG that are involved in nucleotide excision repair and is required for this mechanism of DNA repair. Also plays a role in base excision repair (BER) probably through interaction with UNG. Also recruits SMARCAL1/HARP, which is involved in replication fork restart, to sites of DNA damage. May also play a role in telomere maintenance. The polypeptide is Replication protein A 32 kDa subunit (Mus musculus (Mouse)).